The following is a 420-amino-acid chain: Uteroferrin-associated basic protein 2 (420 aa).

The signal sequence occupies residues 1 to 25; that stretch reads MSHGKMPLVLSLVLILCGLFNSISC. Residues N225, N271, and N343 are each glycosylated (N-linked (GlcNAc...) asparagine).

This sequence belongs to the serpin family. UTMP subfamily.

The protein resides in the secreted. It is found in the extracellular space. This is Uteroferrin-associated basic protein 2 from Sus scrofa (Pig).